The chain runs to 179 residues: ATP synthase subunit delta (179 aa).

This sequence belongs to the ATPase delta chain family. As to quaternary structure, F-type ATPases have 2 components, F(1) - the catalytic core - and F(0) - the membrane proton channel. F(1) has five subunits: alpha(3), beta(3), gamma(1), delta(1), epsilon(1). F(0) has three main subunits: a(1), b(2) and c(10-14). The alpha and beta chains form an alternating ring which encloses part of the gamma chain. F(1) is attached to F(0) by a central stalk formed by the gamma and epsilon chains, while a peripheral stalk is formed by the delta and b chains.

The protein resides in the cell membrane. In terms of biological role, f(1)F(0) ATP synthase produces ATP from ADP in the presence of a proton or sodium gradient. F-type ATPases consist of two structural domains, F(1) containing the extramembraneous catalytic core and F(0) containing the membrane proton channel, linked together by a central stalk and a peripheral stalk. During catalysis, ATP synthesis in the catalytic domain of F(1) is coupled via a rotary mechanism of the central stalk subunits to proton translocation. Its function is as follows. This protein is part of the stalk that links CF(0) to CF(1). It either transmits conformational changes from CF(0) to CF(1) or is implicated in proton conduction. The sequence is that of ATP synthase subunit delta from Rubrobacter xylanophilus (strain DSM 9941 / JCM 11954 / NBRC 16129 / PRD-1).